The sequence spans 73 residues: Protein SlyX homolog (73 aa).

It belongs to the SlyX family.

The chain is Protein SlyX homolog from Histophilus somni (strain 2336) (Haemophilus somnus).